A 246-amino-acid chain; its full sequence is Putative S-adenosyl-L-methionine-dependent methyltransferase Mflv_0168 (246 aa).

S-adenosyl-L-methionine contacts are provided by residues D112 and 141–142 (DL).

This sequence belongs to the UPF0677 family.

In terms of biological role, exhibits S-adenosyl-L-methionine-dependent methyltransferase activity. The chain is Putative S-adenosyl-L-methionine-dependent methyltransferase Mflv_0168 from Mycolicibacterium gilvum (strain PYR-GCK) (Mycobacterium gilvum (strain PYR-GCK)).